A 195-amino-acid chain; its full sequence is GTP cyclohydrolase 1 (195 aa).

Cys86, His89, and Cys158 together coordinate Zn(2+).

The protein belongs to the GTP cyclohydrolase I family. As to quaternary structure, homomer.

The catalysed reaction is GTP + H2O = 7,8-dihydroneopterin 3'-triphosphate + formate + H(+). It functions in the pathway cofactor biosynthesis; 7,8-dihydroneopterin triphosphate biosynthesis; 7,8-dihydroneopterin triphosphate from GTP: step 1/1. The polypeptide is GTP cyclohydrolase 1 (Ruminiclostridium cellulolyticum (strain ATCC 35319 / DSM 5812 / JCM 6584 / H10) (Clostridium cellulolyticum)).